The chain runs to 143 residues: Transcriptional regulatory protein RosR (143 aa).

A C2H3-type zinc finger spans residues 79–97; that stretch reads CLECGGNFKSLKRHLMTHH.

It belongs to the ros/MucR family.

This chain is Transcriptional regulatory protein RosR (rosR), found in Rhizobium etli (strain ATCC 51251 / DSM 11541 / JCM 21823 / NBRC 15573 / CFN 42).